The primary structure comprises 748 residues: MTTIKTSNLGFPRLGRKREWKKAIENYWAHKIDKAELDQTLTDLHKENLLLQKNYHLDSIPVGDFSLYDHILDTSLLFNIIPERFQGREVNDDLLFDIARGNKEHVASALIKWFNTNYHYIVPEWDNVEPKVEKNTLLERFKYAQSINVNAHPVIVGPITFVKLSKGGHQSFEEKVETLLPLYKEVLQSLVDAGAEYIQIDEPILVTDDSESYEDITRKAYDYFANEGLGKYLVIQTYFERVHLKFLSSLPVGGLGLDLVHDNGYNLKQIEDGDFDQSKALYAGIIDGRNVWAADIEAKKQLIETLQQHTQQLVIQPSSSLLHVPVSLDDETLDESIAEGLSFATEKLDELDALRRLFNDNDLSKYEHYKARYERFQSQSFKNLEYDFESVPTHRKSPFAKRKQLQNQRLNLPDLPTTTIGSFPQTREIRKFRADWKNNRITDAEYQEFLQNEIARWIKIQEDIGLDVLVHGEFERNDMVEFFGEKLQGFLVTKFGWVQSYGSRAVKPPVIYGDVKWTAPLTVKETVYAQSLTDKPVKGMLTGPVTILNWSFERVDVPRKVVQDQIALAIDEEVLALEEAGIKVIQVDEPALREGLPLRSEYHEQYLEDAVHSFKLATSSVHDETQIHTHMCYSQFGQIIHAIHDLDADVISIETSRSHGDLIQDFEDINYDLGIGLGVYDIHSPRIPTEEEITTAINRSLQQIDRSLFWVNPDCGLKTRKENEVKDALTVLVNAVKKKRQESESTTA.

5-methyltetrahydropteroyltri-L-glutamate is bound by residues 18–21 and K112; that span reads REWK. L-homocysteine contacts are provided by residues 420–422 and E473; that span reads IGS. L-methionine-binding positions include 420 to 422 and E473; that span reads IGS. Residue W550 participates in 5-methyltetrahydropteroyltri-L-glutamate binding. L-homocysteine is bound at residue D588. D588 lines the L-methionine pocket. E594 provides a ligand contact to 5-methyltetrahydropteroyltri-L-glutamate. 3 residues coordinate Zn(2+): H630, C632, and E654. The active-site Proton donor is the H683. C715 provides a ligand contact to Zn(2+).

This sequence belongs to the vitamin-B12 independent methionine synthase family. Zn(2+) serves as cofactor.

It catalyses the reaction 5-methyltetrahydropteroyltri-L-glutamate + L-homocysteine = tetrahydropteroyltri-L-glutamate + L-methionine. The protein operates within amino-acid biosynthesis; L-methionine biosynthesis via de novo pathway; L-methionine from L-homocysteine (MetE route): step 1/1. Catalyzes the transfer of a methyl group from 5-methyltetrahydrofolate to homocysteine resulting in methionine formation. The chain is 5-methyltetrahydropteroyltriglutamate--homocysteine methyltransferase from Staphylococcus epidermidis (strain ATCC 35984 / DSM 28319 / BCRC 17069 / CCUG 31568 / BM 3577 / RP62A).